Here is a 615-residue protein sequence, read N- to C-terminus: Sodium-coupled neutral amino acid transporter 9 homolog (615 aa).

Topologically, residues 1 to 165 are cytoplasmic; that stretch reads MPPFFAEFTE…LKDVSGKQGS (165 aa). The segment at 41 to 65 is disordered; sequence VDDNDTDPLLDDEPPRRLPPAGGVP. Acidic residues predominate over residues 42–52; that stretch reads DDNDTDPLLDD. Residues 166–186 form a helical membrane-spanning segment; the sequence is IVTIFSIWNTMMGTSLLAMPW. An important for arginine binding and amino acid transport region spans residues 175-180; that stretch reads TMMGTS. Residues 187-192 are Lumenal-facing; the sequence is ALQQAG. The chain crosses the membrane as a helical span at residues 193 to 213; the sequence is LVLGIIIMLSMAAICFYTAYI. Residues 214–246 lie on the Cytoplasmic side of the membrane; sequence VIESPKRLQDLSVDPLLAEFSDVCKSLFGRIGE. Residues 247–273 form a helical membrane-spanning segment; sequence YCAVVFSVCVLIGGVIVYWVLMSNFLY. The Lumenal portion of the chain corresponds to 274-341; it reads YTGAVVYESM…TGDDSWSFDK (68 aa). N-linked (GlcNAc...) asparagine glycosylation is found at Asn-286 and Asn-295. Cys-304 and Cys-478 are oxidised to a cystine. A helical membrane pass occupies residues 342–358; it reads FWTLRGTVPIYLAFALF. Topologically, residues 359 to 367 are cytoplasmic; sequence PLMNFKSPT. The helical transmembrane segment at 368 to 392 threads the bilayer; the sequence is FFTKFNVLGTISVMYLLMFVFSKLL. At 393 to 413 the chain is on the lumenal side; sequence ECGVNMDFSNPKSIHYVQLAN. The helical transmembrane segment at 414-434 threads the bilayer; that stretch reads MHFPALSGTLTLSYFIHNAVL. At 435–451 the chain is on the cytoplasmic side; it reads TILRNQKHPENNARDLS. A helical transmembrane segment spans residues 452–472; that stretch reads IGYCLVAFCYVFIGFTFFAAF. Topologically, residues 473 to 491 are lumenal; that stretch reads PVQRSCISDNFLNNFGAGD. Residues 492-512 form a helical membrane-spanning segment; the sequence is VLSSTARLFLLFQMITVLPLL. Residues 513-533 are Cytoplasmic-facing; sequence MFLVRSQLFYAIFGQTWPGAI. A helical transmembrane segment spans residues 534-554; sequence RVIILNVLLIAVAVGFATFYP. Residues 555–561 are Lumenal-facing; that stretch reads NVGSILR. A helical membrane pass occupies residues 562–582; it reads YVGSISGLVYVFALPAMVYIK. Over 583–594 the chain is Cytoplasmic; sequence QSEAAGTLTPMK. The chain crosses the membrane as a helical span at residues 595-615; the sequence is KYAHYGIIVIGVANLIAQFVI.

It belongs to the amino acid/polyamine transporter 2 family. SLC38A9 subfamily.

The protein resides in the lysosome membrane. Its subcellular location is the late endosome membrane. Its activity is regulated as follows. Amino acid transport is sodium-dependent. Transport of leucine, tyrosine and phenylalanine is increased by arginine binding. Its function is as follows. Lysosomal amino acid transporter involved in the activation of mTORC1 in response to amino acid levels. Probably acts as an amino acid sensor of the Rag GTPases and Ragulator complexes, 2 complexes involved in amino acid sensing and activation of mTORC1, a signaling complex promoting cell growth in response to growth factors, energy levels, and amino acids. The polypeptide is Sodium-coupled neutral amino acid transporter 9 homolog (Caenorhabditis elegans).